The sequence spans 257 residues: Imidazole glycerol phosphate synthase subunit HisF (257 aa).

Active-site residues include aspartate 12 and aspartate 131.

The protein belongs to the HisA/HisF family. In terms of assembly, heterodimer of HisH and HisF.

It is found in the cytoplasm. The enzyme catalyses 5-[(5-phospho-1-deoxy-D-ribulos-1-ylimino)methylamino]-1-(5-phospho-beta-D-ribosyl)imidazole-4-carboxamide + L-glutamine = D-erythro-1-(imidazol-4-yl)glycerol 3-phosphate + 5-amino-1-(5-phospho-beta-D-ribosyl)imidazole-4-carboxamide + L-glutamate + H(+). Its pathway is amino-acid biosynthesis; L-histidine biosynthesis; L-histidine from 5-phospho-alpha-D-ribose 1-diphosphate: step 5/9. IGPS catalyzes the conversion of PRFAR and glutamine to IGP, AICAR and glutamate. The HisF subunit catalyzes the cyclization activity that produces IGP and AICAR from PRFAR using the ammonia provided by the HisH subunit. The chain is Imidazole glycerol phosphate synthase subunit HisF from Hydrogenovibrio crunogenus (strain DSM 25203 / XCL-2) (Thiomicrospira crunogena).